Here is a 707-residue protein sequence, read N- to C-terminus: Caprin-1 (707 aa).

2 stretches are compositionally biased toward low complexity: residues 1-15 and 22-43; these read MPSA…SKSS and GSSG…PATG. The tract at residues 1–48 is disordered; it reads MPSATSHSGSGSKSSGPPPPSGSSGSEAAAGAAAPASQHPATGTGAVQ. Residue proline 2 is modified to N-acetylproline. Serine 10 bears the Phosphoserine mark. Positions 58–92 form a coiled coil; sequence VIDKKLRNLEKKKGKLDDYQERMNKGERLNQDQLD. The residue at position 113 (serine 113) is a Phosphoserine. Residues 123–151 adopt a coiled-coil conformation; it reads KTIKKTARREQLMREEAEQKRLKTVLELQ. Arginine 163 carries the post-translational modification Omega-N-methylarginine. The interval 325–347 is disordered; the sequence is LQQQPQAASPSVPEPHSLTPVAQ. Positions 326–335 are enriched in low complexity; the sequence is QQQPQAASPS. A phosphoserine mark is found at serine 333 and serine 341. The interval 358–379 is G3BP1-binding; that stretch reads QDLMAQMQGPYNFIQDSMLDFE. 3 disordered regions span residues 412-443, 523-558, and 570-620; these read ESRL…YTAS, PVPP…EQTE, and TYHG…RGLM. Positions 431 to 443 are enriched in polar residues; that stretch reads PLVSSTSEGYTAS. Positions 535–558 are enriched in low complexity; it reads QQSQYQASYNQSFSSQPHQVEQTE. A compositionally biased stretch (polar residues) spans 572–603; the sequence is HGSQDQPHQVPGNHQQPPQQSTGFPRSSQPYY. Tyrosine 623 carries the post-translational modification Phosphotyrosine. An omega-N-methylarginine mark is found at arginine 624 and arginine 631. Phosphotyrosine is present on residues tyrosine 634 and tyrosine 637. Arginine 638 carries the post-translational modification Omega-N-methylarginine. The span at 641-655 shows a compositional bias: polar residues; it reads FSNTPNSGYTQSQFN. Residues 641–707 are disordered; the sequence is FSNTPNSGYT…MPQMNTQQVN (67 aa). Residues serine 642 and serine 647 are each glycosylated (O-linked (GlcNAc) serine). Phosphotyrosine occurs at positions 649, 660, 663, and 668. 2 stretches are compositionally biased toward low complexity: residues 674-684 and 695-707; these read RGSGQSGPRGA and NRGM…QQVN. Arginine 696 carries the post-translational modification Asymmetric dimethylarginine; alternate. Arginine 696 carries the omega-N-methylarginine; alternate modification.

This sequence belongs to the caprin family. May form homomultimers. Interacts with G3BP1; interaction is direct and promotes stress granule formation. Interacts with G3BP2; interaction is direct and promotes stress granule formation. Interacts with PQBP1. Interacts with DDX3X. Interacts (when phosphorylated by EPHA4) with FMR1; interaction with FMR1 promotes formation of a membraneless compartment. Tyrosine phosphorylation by EPHA4 promotes interaction with FMR1 and liquid-liquid phase separation (LLPS) for the formation of a membraneless compartment that concentrates mRNAs with associated regulatory factors. In terms of processing, O-glycosylated (O-GlcNAcylated), in a cell cycle-dependent manner. O-glycosylation by OGT inhibit ability to undergo liquid-liquid phase separation (LLPS). Expressed in hippocampal and neocortical pyramidal neurons, but not in Purkinje cells.

Its subcellular location is the cytoplasm. The protein resides in the cytoplasmic ribonucleoprotein granule. It localises to the cytosol. It is found in the cell projection. The protein localises to the dendrite. Its subcellular location is the lamellipodium. With respect to regulation, ability to mediate liquid-liquid phase separation is regulated by ATP: moderate concentrations of ATP enhance phase separation, whereas high concentrations of ATP lead to inhibition of phase separation. MRNA-binding protein that acts as a regulator of mRNAs transport, translation and/or stability, and which is involved in neurogenesis, synaptic plasticity in neurons and cell proliferation and migration in multiple cell types. Plays an essential role in cytoplasmic stress granule formation. Acts as an mRNA regulator by mediating formation of some phase-separated membraneless compartment: undergoes liquid-liquid phase separation upon binding to target mRNAs, leading to assemble mRNAs into cytoplasmic ribonucleoprotein granules that concentrate mRNAs with associated regulatory factors. Undergoes liquid-liquid phase separation following phosphorylation and interaction with FMR1, promoting formation of cytoplasmic ribonucleoprotein granules that concentrate mRNAs with factors that inhibit translation and mediate deadenylation of target mRNAs. In these cytoplasmic ribonucleoprotein granules, CAPRIN1 mediates recruitment of CNOT7 deadenylase, leading to mRNA deadenylation and degradation. Binds directly and selectively to MYC and CCND2 mRNAs. In neuronal cells, directly binds to several mRNAs associated with RNA granules, including BDNF, CAMK2A, CREB1, MAP2, NTRK2 mRNAs, as well as to GRIN1 and KPNB1 mRNAs, but not to rRNAs. This chain is Caprin-1 (Caprin1), found in Rattus norvegicus (Rat).